The primary structure comprises 190 residues: UPF0340 protein BC_5317 (190 aa).

It belongs to the UPF0340 family.

The sequence is that of UPF0340 protein BC_5317 from Bacillus cereus (strain ATCC 14579 / DSM 31 / CCUG 7414 / JCM 2152 / NBRC 15305 / NCIMB 9373 / NCTC 2599 / NRRL B-3711).